A 338-amino-acid chain; its full sequence is Ketol-acid reductoisomerase (NADP(+)) (338 aa).

Positions 2–182 (TKMYYEEDTD…GGARAGVLET (181 aa)) constitute a KARI N-terminal Rossmann domain. Residues 25-28 (YGSQ), Ser51, Ser53, and 83-86 (DELQ) contribute to the NADP(+) site. The active site involves His108. Gly134 serves as a coordination point for NADP(+). A KARI C-terminal knotted domain is found at 183-330 (TFRTETETDL…SEIRKLYCWN (148 aa)). Positions 191, 195, 227, and 231 each coordinate Mg(2+). Ser252 is a binding site for substrate.

The protein belongs to the ketol-acid reductoisomerase family. The cofactor is Mg(2+).

The catalysed reaction is (2R)-2,3-dihydroxy-3-methylbutanoate + NADP(+) = (2S)-2-acetolactate + NADPH + H(+). It carries out the reaction (2R,3R)-2,3-dihydroxy-3-methylpentanoate + NADP(+) = (S)-2-ethyl-2-hydroxy-3-oxobutanoate + NADPH + H(+). The protein operates within amino-acid biosynthesis; L-isoleucine biosynthesis; L-isoleucine from 2-oxobutanoate: step 2/4. It participates in amino-acid biosynthesis; L-valine biosynthesis; L-valine from pyruvate: step 2/4. Involved in the biosynthesis of branched-chain amino acids (BCAA). Catalyzes an alkyl-migration followed by a ketol-acid reduction of (S)-2-acetolactate (S2AL) to yield (R)-2,3-dihydroxy-isovalerate. In the isomerase reaction, S2AL is rearranged via a Mg-dependent methyl migration to produce 3-hydroxy-3-methyl-2-ketobutyrate (HMKB). In the reductase reaction, this 2-ketoacid undergoes a metal-dependent reduction by NADPH to yield (R)-2,3-dihydroxy-isovalerate. The chain is Ketol-acid reductoisomerase (NADP(+)) from Clostridium botulinum (strain Eklund 17B / Type B).